The sequence spans 238 residues: Small ribosomal subunit protein eS4 (238 aa).

One can recognise an S4 RNA-binding domain in the interval 38 to 100 (LPLAIVIRDV…TGEVYRVVPD (63 aa)).

The protein belongs to the eukaryotic ribosomal protein eS4 family.

In Pyrobaculum arsenaticum (strain DSM 13514 / JCM 11321 / PZ6), this protein is Small ribosomal subunit protein eS4.